Consider the following 116-residue polypeptide: UPF0342 protein RBAM_010030 (116 aa).

The protein belongs to the UPF0342 family.

This chain is UPF0342 protein RBAM_010030, found in Bacillus velezensis (strain DSM 23117 / BGSC 10A6 / LMG 26770 / FZB42) (Bacillus amyloliquefaciens subsp. plantarum).